Consider the following 288-residue polypeptide: 4-diphosphocytidyl-2-C-methyl-D-erythritol kinase (288 aa).

Lysine 8 is an active-site residue. Residue 92–102 (PVAAGMAGGST) coordinates ATP. Aspartate 134 is a catalytic residue.

The protein belongs to the GHMP kinase family. IspE subfamily.

It catalyses the reaction 4-CDP-2-C-methyl-D-erythritol + ATP = 4-CDP-2-C-methyl-D-erythritol 2-phosphate + ADP + H(+). Its pathway is isoprenoid biosynthesis; isopentenyl diphosphate biosynthesis via DXP pathway; isopentenyl diphosphate from 1-deoxy-D-xylulose 5-phosphate: step 3/6. Functionally, catalyzes the phosphorylation of the position 2 hydroxy group of 4-diphosphocytidyl-2C-methyl-D-erythritol. The polypeptide is 4-diphosphocytidyl-2-C-methyl-D-erythritol kinase (Clostridium perfringens (strain SM101 / Type A)).